The sequence spans 1435 residues: RNA-directed RNA polymerase VP1 (1435 aa).

Positions 604 to 880 (VLHNVLRPAY…KGVLGAPELF (277 aa)) constitute a RdRp catalytic domain.

The protein belongs to the reoviridae RNA-directed RNA polymerase family. As to quaternary structure, interacts with VP4.

It catalyses the reaction RNA(n) + a ribonucleoside 5'-triphosphate = RNA(n+1) + diphosphate. Functionally, RNA-directed RNA polymerase involved in transcription and genome replication. Following infection, catalyzes the synthesis of fully conservative plus strands. After core assembly, which consists in recruitment of one capped plus-strand for each genomic segments and polymerase complexes, the polymerase switches mode and catalyzes the synthesis of complementary minus-strands. The chain is RNA-directed RNA polymerase VP1 from Callospermophilus lateralis (Golden-mantled ground squirrel).